Reading from the N-terminus, the 660-residue chain is E3 ubiquitin-protein ligase ORTHRUS 3 (660 aa).

The PHD-type zinc finger occupies 12–63 (EGVCMRCKSMPPPEESLTCGTCVTPWHVSCLLSPPETLSATLQWLCPDCSGE). The tract at residues 107–129 (QLLSGKGVVDEDDEEEKKKTSKG) is disordered. The RING-type 1 zinc finger occupies 141 to 197 (CSFCMQSLQKPVSVRVLFALALMLVWFLESTPCGHNACLKCFLKWMGQGHRSCGTCR). Residues 285 to 434 (VRNQGLLVGE…CRFLFVRCDN (150 aa)) enclose the YDG domain. Residues 528–585 (CQICQKVMTNPVTTPCAHNFCKACLESKFAGTALVRERGSGGRKLRSQKSVMKCPCCP) form an RING-type 2 zinc finger. Residues 593 to 622 (QNPQVNREVAEVIEKLKKQEEEENAKSLDE) adopt a coiled-coil conformation. 2 stretches are compositionally biased toward basic and acidic residues: residues 610-621 (KQEEEENAKSLD) and 637-646 (QPKKRIKLDT). The segment at 610-660 (KQEEEENAKSLDEGQCSGTSHEEEDDEQPKKRIKLDTDAEVSATVVESDMK) is disordered.

It is found in the nucleus. The catalysed reaction is S-ubiquitinyl-[E2 ubiquitin-conjugating enzyme]-L-cysteine + [acceptor protein]-L-lysine = [E2 ubiquitin-conjugating enzyme]-L-cysteine + N(6)-ubiquitinyl-[acceptor protein]-L-lysine.. It participates in protein modification; protein ubiquitination. Its function is as follows. E3 ubiquitin-protein ligase. May participate in CpG methylation-dependent transcriptional regulation. The polypeptide is E3 ubiquitin-protein ligase ORTHRUS 3 (ORTH3) (Arabidopsis thaliana (Mouse-ear cress)).